Consider the following 299-residue polypeptide: Homoserine kinase (299 aa).

ATP is bound at residue 84 to 94 (PISRGLGSSSA).

This sequence belongs to the GHMP kinase family. Homoserine kinase subfamily.

The protein localises to the cytoplasm. The catalysed reaction is L-homoserine + ATP = O-phospho-L-homoserine + ADP + H(+). Its pathway is amino-acid biosynthesis; L-threonine biosynthesis; L-threonine from L-aspartate: step 4/5. Functionally, catalyzes the ATP-dependent phosphorylation of L-homoserine to L-homoserine phosphate. In Helicobacter hepaticus (strain ATCC 51449 / 3B1), this protein is Homoserine kinase.